Consider the following 388-residue polypeptide: Nesprin-4 (388 aa).

Topologically, residues 1-339 (MALVPPLGRE…GVPAPASKRP (339 aa)) are cytoplasmic. The disordered stretch occupies residues 60-92 (ELKSTESATSPSRLPLASSHEHQDGGKPCEHSD). The span at 78–92 (SHEHQDGGKPCEHSD) shows a compositional bias: basic and acidic residues. The KASH domain maps to 331–388 (VPAPASKRPLTLFFLLLFLLLVGATLLLPLSGVSCCSHARLARTPYLVLSYVNGLPPI). The helical; Anchor for type IV membrane protein transmembrane segment at 340–360 (LTLFFLLLFLLLVGATLLLPL) threads the bilayer. The Perinuclear space portion of the chain corresponds to 361–388 (SGVSCCSHARLARTPYLVLSYVNGLPPI).

It belongs to the nesprin family. Core component of LINC complexes which are composed of inner nuclear membrane SUN domain-containing proteins coupled to outer nuclear membrane KASH domain-containing nesprins. SUN and KASH domain-containing proteins seem to bind each other promiscuously; however, differentially expression of LINC complex constituents can give rise to specific assemblies. Probably part of a SUN1-containing LINC complex. Interacts with kinesins KIF5B and KLC1. In terms of processing, the disulfid bond with SUN1 or SUN2 is required for stability of the respective LINC complex under tensile forces. In terms of tissue distribution, expressed in secretory epithelial cells, such as those found in exocrine pancreas, bulbourethral gland, mammary gland and salivary gland (at protein level). Also expressed in the cochlea, where it is restricted primarily to the 3 rows of outer hair cells and 1 row of inner hair cells (at protein level). Not detected in other cells of the cochlea, including Deiter's cells and pillar cells, nor in liver and kidney (at protein level).

It localises to the nucleus outer membrane. In terms of biological role, as a component of the LINC (LInker of Nucleoskeleton and Cytoskeleton) complex, involved in the connection between the nuclear lamina and the cytoskeleton. The nucleocytoplasmic interactions established by the LINC complex play an important role in the transmission of mechanical forces across the nuclear envelope and in nuclear movement and positioning. Behaves as a kinesin cargo, providing a functional binding site for kinesin-1 at the nuclear envelope. Hence may contribute to the establishment of secretory epithelial morphology, by promoting kinesin-dependent apical migration of the centrosome and Golgi apparatus and basal localization of the nucleus. In Mus musculus (Mouse), this protein is Nesprin-4 (Syne4).